The sequence spans 68 residues: Small ribosomal subunit protein eS17 (68 aa).

Belongs to the eukaryotic ribosomal protein eS17 family.

In Staphylothermus marinus (strain ATCC 43588 / DSM 3639 / JCM 9404 / F1), this protein is Small ribosomal subunit protein eS17.